We begin with the raw amino-acid sequence, 717 residues long: Probable inactive histone-lysine N-methyltransferase SUVR2 (717 aa).

A compositionally biased stretch (basic and acidic residues) spans 61-73; it reads QAIQESEEKKADE. The interval 61–136 is disordered; the sequence is QAIQESEEKK…LGSPTLEGPS (76 aa). Over residues 120–130 the composition is skewed to low complexity; that stretch reads SALASPSLGSP. Zn(2+) contacts are provided by Cys445, Cys446, Cys449, Cys453, Cys462, Cys529, Cys533, Cys535, and Cys539. The Pre-SET domain occupies 458–547; it reads MACRCATAFN…NCGNRVVQQG (90 aa). Positions 550–679 constitute an SET domain; the sequence is NKLQVFFTPN…AMEELTWDYG (130 aa). Residues 561–563 and 635–636 contribute to the S-adenosyl-L-methionine site; these read RGW and NH. Position 638 (Cys638) interacts with Zn(2+). Position 678 (Tyr678) interacts with S-adenosyl-L-methionine. The region spanning 690–706 is the Post-SET domain; sequence SPFHCQCGSDFCRVRKQ. Zn(2+)-binding residues include Cys694, Cys696, and Cys701.

This sequence belongs to the class V-like SAM-binding methyltransferase superfamily. Histone-lysine methyltransferase family. In terms of assembly, interacts with SUVR1, CHR19, CHR28 and itself. Interacts with CHR27.

Its subcellular location is the nucleus. The protein resides in the chromosome. Its function is as follows. Probable inactive histone-lysine methyltransferase that acts as regulator of transctiptional gene silencing independently of histone H3K9 methylation. Contributes to transcriptional gene silencing at RNA-directed DNA methylation (RdDM) target loci but also at RdDM-independent target loci. Forms a complex with SUVR1 and associates with the SNF2-related chromatin-remodeling proteins CHR19, CHR27, and CHR28, thereby mediating nucleosome positioning and transcriptional silencing. Does not possess histone-lysine methyltransferase activity in vitro, and the conserved catalytic sites of SUVR2 are dispensable for its function in transcriptional gene silencing. This chain is Probable inactive histone-lysine N-methyltransferase SUVR2 (SUVR2), found in Arabidopsis thaliana (Mouse-ear cress).